We begin with the raw amino-acid sequence, 733 residues long: Polyribonucleotide nucleotidyltransferase (733 aa).

Positions 489 and 495 each coordinate Mg(2+). One can recognise a KH domain in the interval proline 556 to isoleucine 615. The region spanning aspartate 625–lysine 693 is the S1 motif domain. Residues serine 691–glutamate 733 form a disordered region. The span at lysine 704–lysine 723 shows a compositional bias: basic residues. Residues aspartate 724 to glutamate 733 show a composition bias toward basic and acidic residues.

Belongs to the polyribonucleotide nucleotidyltransferase family. The cofactor is Mg(2+).

It is found in the cytoplasm. The catalysed reaction is RNA(n+1) + phosphate = RNA(n) + a ribonucleoside 5'-diphosphate. Involved in mRNA degradation. Catalyzes the phosphorolysis of single-stranded polyribonucleotides processively in the 3'- to 5'-direction. This Streptococcus sanguinis (strain SK36) protein is Polyribonucleotide nucleotidyltransferase.